The primary structure comprises 367 residues: Mitochondrial distribution and morphology protein 34 (367 aa).

An SMP-LTD domain is found at 1 to 197 (MSFNFTWPEF…LPSIIHRLSQ (197 aa)). 2 disordered regions span residues 267-311 (QGLK…ALSS) and 347-367 (PAHR…FHLS). Residues 286–302 (FHTTSRVRVPSSLESNA) show a composition bias toward polar residues.

The protein belongs to the MDM34 family. Component of the ER-mitochondria encounter structure (ERMES) or MDM complex, composed of MMM1, MDM10, MDM12 and MDM34.

Its subcellular location is the mitochondrion outer membrane. Component of the ERMES/MDM complex, which serves as a molecular tether to connect the endoplasmic reticulum (ER) and mitochondria. Components of this complex are involved in the control of mitochondrial shape and protein biogenesis, and function in nonvesicular lipid trafficking between the ER and mitochondria. MDM34 is required for the interaction of the ER-resident membrane protein MMM1 and the outer mitochondrial membrane-resident beta-barrel protein MDM10. In Malassezia globosa (strain ATCC MYA-4612 / CBS 7966) (Dandruff-associated fungus), this protein is Mitochondrial distribution and morphology protein 34.